A 73-amino-acid chain; its full sequence is MWFCIDLGADAFEEAGALAGKKNKRALQHILGLNIFKQELIPPCKDPDPFQIQLLLKNYTLKNVSTIFSYYCQ.

The protein belongs to the asfivirus DP63R family.

This is an uncharacterized protein from Ornithodoros (relapsing fever ticks).